The following is a 395-amino-acid chain: S-adenosylmethionine synthase (395 aa).

Residue His18 participates in ATP binding. Asp20 serves as a coordination point for Mg(2+). Glu46 is a K(+) binding site. L-methionine contacts are provided by Glu59 and Gln103. A flexible loop region spans residues 103-113 (QSVDIAVGVDA). ATP contacts are provided by residues 170–172 (DAK), 235–236 (KF), Asp244, 250–251 (RK), Ala267, and Lys271. Position 244 (Asp244) interacts with L-methionine. An L-methionine-binding site is contributed by Lys275.

The protein belongs to the AdoMet synthase family. In terms of assembly, homotetramer; dimer of dimers. Mg(2+) serves as cofactor. It depends on K(+) as a cofactor.

It localises to the cytoplasm. The catalysed reaction is L-methionine + ATP + H2O = S-adenosyl-L-methionine + phosphate + diphosphate. Its pathway is amino-acid biosynthesis; S-adenosyl-L-methionine biosynthesis; S-adenosyl-L-methionine from L-methionine: step 1/1. Its function is as follows. Catalyzes the formation of S-adenosylmethionine (AdoMet) from methionine and ATP. The overall synthetic reaction is composed of two sequential steps, AdoMet formation and the subsequent tripolyphosphate hydrolysis which occurs prior to release of AdoMet from the enzyme. The chain is S-adenosylmethionine synthase from Acidiphilium cryptum (strain JF-5).